Consider the following 584-residue polypeptide: MWGVSSLDYDDDEELTRLLAVWDDEPLSLFLMNTFLLHQEGFRNLPFTVLRLSYAYRIFAKMLRAHGTPVAEDFMTRVAALARDEGLRDILGQRHAAEASRAEIAEALERVAERCDDRHGGSDDYVWLSRLLDLAPNYRQVELFQLLEKESRGQSRNSVWHLLRMDTVSATKFYEAFVSGCLPGAAAADGSGGGGSHYTGSRAGVSPGIQFGIKHEGLVKTLVECYVMHGREPVRDGLGLLIDPTSGLLGASMDLCFGVLKQGSGRTLLVEPCARVYEIKCRYKYLRKKEDPFVQNVLRRHDAAAVASLLQSHPVPGVEFRGERETPSAREFLLSHDAALFRATLKRARPLKPPEPLREYLADLLYLNKAECSEVIVFDAKHLSDDNSDGDATITINASLGLAAGDAAGGGADHHLRGSPGDSPPPIPFEDENTPELLGRLNVYEVARFSLPAFVNPRHQYYFQMLIQQYVLSQYYIKKHPDPERIDFRDLPTVYLVSAIFREREESELGCELLAGGRVFHCDHIPLLLIVTPVVFDPQFTRHAVSTVLDRWSRDLSRKTNLPIWVPNSANEYVVSSVPRPVSP.

The interval 409–430 (GGGADHHLRGSPGDSPPPIPFE) is disordered.

Belongs to the herpesviridae alkaline nuclease family. In terms of assembly, interacts with major DNA-binding protein; this interaction increases the nuclease processivity of the alkaline exonuclease.

It localises to the host nucleus. The protein resides in the host cytoplasm. In terms of biological role, plays a role in processing non linear or branched viral DNA intermediates in order to promote the production of mature packaged unit-length linear progeny viral DNA molecules. Exhibits endonuclease and exonuclease activities and accepts both double-stranded and single-stranded DNA as substrate. Exonuclease digestion of DNA is in the 5'-&gt; 3' direction and the products are 5'-monophosphate nucleosides. Additionally, forms a recombinase with the major DNA-binding protein, which displays strand exchange activity. This Human cytomegalovirus (strain AD169) (HHV-5) protein is Alkaline nuclease (UL98).